A 487-amino-acid chain; its full sequence is FIVLVICLSCLISFFLWNQNRAKGKLPPGPTPLPIIGNILQINTKNVSKSLSKLAENYGPVFTVYFGMKPTVVLYGYEAVKEALIDRSEEFSGRGHFPLLDWTIQGLGIVFSNGEKWKQTRRFSLTVLRNMGMGKKTVEDRIQEEALYLVEALKKTNASPCDPTFLLGCAPCNVICSIIFQNRFEYDDKDFLTLLEYFHENLLISSTSWIQLYNAFPLLIHYLPGSHHVLFKNIANQFKFISEKIKEHEESLNFSNPRDFIDYFLIKIEKEKHNKQSEFTMDNLIITIWDVFSAGTETTSTTLRYGLLVLLKHPDVTAKVQEEIHRVVGRHRSPCMQDRSCMPYTDAVVHEIQRYIDLVPNNLPHSVTQDIKFREYLIPKGTTILTSLTSVLHDEKGFPNPDQFDPGHFLDENGSFKKSDYFMAFSAGKRVCVGEGLARMELFLLLTNILQHFTLKPLVDPKDIDTTPIANGLGATPPSYKLCFVPV.

Cys432 lines the heme pocket.

This sequence belongs to the cytochrome P450 family. The cofactor is heme. In terms of tissue distribution, liver.

Its subcellular location is the endoplasmic reticulum membrane. The protein resides in the microsome membrane. The catalysed reaction is an organic molecule + reduced [NADPH--hemoprotein reductase] + O2 = an alcohol + oxidized [NADPH--hemoprotein reductase] + H2O + H(+). Functionally, cytochromes P450 are a group of heme-thiolate monooxygenases. In liver microsomes, this enzyme is involved in an NADPH-dependent electron transport pathway. It oxidizes a variety of structurally unrelated compounds, including steroids, fatty acids, and xenobiotics. Showed testosterone hydrolase activity. In Canis lupus familiaris (Dog), this protein is Cytochrome P450 2C21 (CYP2C21).